Consider the following 430-residue polypeptide: MSSVVVVGTQWGDEGKGKITDFLSENAEVIARYQGGNNAGHTIKFDGITYKLHLIPSGIFYKDKTCVIGNGMVVDPKALVTELAYLHERNVSTDNLRISNRAHVILPYHLKLDEVEEERKGANKIGTTKKGIGPAYMDKAARIGIRIADLLDRDAFAEKLERNLEEKNRLLEKMYETEGFKLEDILDEYYEYGQQIKKYVCDTSVVLNDALDEGRRVLFEGAQGVMLDIDQGTYPFVTSSNPVAAVSQSVLVSARPKIKHVVGVSKAYTTRVGDGPFPTELKDEIGDQIREVGREYGTTTGRPPRVGWFDSVVVRHARRVSGITDLSLNSIDVLAGIETLKICVRYRYKGEIIEEFPASLKALAECEPVYEEMPGWTEDITGAKSLSELPENARHYLERVSQLTGIPLSIFSVGPDRSQTNVLRSVYRAN.

GTP-binding positions include 12 to 18 (GDEGKGK) and 40 to 42 (GHT). Aspartate 13 (proton acceptor) is an active-site residue. Residues aspartate 13 and glycine 40 each contribute to the Mg(2+) site. Residues 13-16 (DEGK), 38-41 (NAGH), threonine 128, arginine 142, glutamine 223, threonine 238, and arginine 302 contribute to the IMP site. The active-site Proton donor is histidine 41. Residues 330 to 332 (SID) and 412 to 414 (SVG) each bind GTP.

It belongs to the adenylosuccinate synthetase family. Homodimer. Requires Mg(2+) as cofactor.

It localises to the cytoplasm. The catalysed reaction is IMP + L-aspartate + GTP = N(6)-(1,2-dicarboxyethyl)-AMP + GDP + phosphate + 2 H(+). It participates in purine metabolism; AMP biosynthesis via de novo pathway; AMP from IMP: step 1/2. Plays an important role in the de novo pathway of purine nucleotide biosynthesis. Catalyzes the first committed step in the biosynthesis of AMP from IMP. This Bacillus subtilis (strain 168) protein is Adenylosuccinate synthetase.